Here is a 329-residue protein sequence, read N- to C-terminus: Glycerol-3-phosphate dehydrogenase [NAD(P)+] (329 aa).

NADPH-binding residues include Trp-15, His-35, and Lys-107. Sn-glycerol 3-phosphate is bound by residues Lys-107, Gly-135, and Ser-137. Ala-139 provides a ligand contact to NADPH. Sn-glycerol 3-phosphate is bound by residues Lys-190, Asp-243, Ser-253, Arg-254, and Asn-255. Residue Lys-190 is the Proton acceptor of the active site. Arg-254 serves as a coordination point for NADPH. 2 residues coordinate NADPH: Leu-276 and Glu-278.

This sequence belongs to the NAD-dependent glycerol-3-phosphate dehydrogenase family.

The protein resides in the cytoplasm. The enzyme catalyses sn-glycerol 3-phosphate + NAD(+) = dihydroxyacetone phosphate + NADH + H(+). It catalyses the reaction sn-glycerol 3-phosphate + NADP(+) = dihydroxyacetone phosphate + NADPH + H(+). Its pathway is membrane lipid metabolism; glycerophospholipid metabolism. Functionally, catalyzes the reduction of the glycolytic intermediate dihydroxyacetone phosphate (DHAP) to sn-glycerol 3-phosphate (G3P), the key precursor for phospholipid synthesis. The chain is Glycerol-3-phosphate dehydrogenase [NAD(P)+] from Rhodopseudomonas palustris (strain BisB5).